The following is a 185-amino-acid chain: Ribosome-recycling factor (185 aa).

The protein belongs to the RRF family.

The protein resides in the cytoplasm. Functionally, responsible for the release of ribosomes from messenger RNA at the termination of protein biosynthesis. May increase the efficiency of translation by recycling ribosomes from one round of translation to another. The chain is Ribosome-recycling factor from Halothermothrix orenii (strain H 168 / OCM 544 / DSM 9562).